A 353-amino-acid polypeptide reads, in one-letter code: Protein RecA (353 aa).

67–74 (GPESSGKT) contacts ATP.

Belongs to the RecA family.

The protein resides in the cytoplasm. Can catalyze the hydrolysis of ATP in the presence of single-stranded DNA, the ATP-dependent uptake of single-stranded DNA by duplex DNA, and the ATP-dependent hybridization of homologous single-stranded DNAs. It interacts with LexA causing its activation and leading to its autocatalytic cleavage. This chain is Protein RecA, found in Salmonella agona (strain SL483).